The primary structure comprises 285 residues: Sulfotransferase 2A2 (285 aa).

The 3'-phosphoadenylyl sulfate site is built by K44, S45, G46, T47, N48, and W49. The active-site Proton acceptor is H99. The 3'-phosphoadenylyl sulfate site is built by R121, S129, Y184, S218, R247, K248, and G249.

This sequence belongs to the sulfotransferase 1 family. Detected in liver.

It localises to the cytoplasm. The catalysed reaction is an alcohol + 3'-phosphoadenylyl sulfate = an alkyl sulfate + adenosine 3',5'-bisphosphate + H(+). In terms of biological role, sulfotransferase that utilizes 3'-phospho-5'-adenylyl sulfate (PAPS) as sulfonate donor to catalyze the sulfate conjugation of a potential wide variety of acceptor molecules bearing a hydroxyl group. Sulfonation increases the water solubility of most compounds, and therefore their renal excretion, but it can also result in bioactivation to form active metabolites. The polypeptide is Sulfotransferase 2A2 (Rattus norvegicus (Rat)).